Consider the following 1456-residue polypeptide: CLIP-associating protein 1-B (1456 aa).

3 HEAT repeats span residues leucine 68–threonine 87, glutamine 88–asparagine 124, and leucine 163–glutamate 200. The disordered stretch occupies residues threonine 237–alanine 296. The span at alanine 284–alanine 296 shows a compositional bias: low complexity. The stretch at threonine 442–threonine 479 is one HEAT 4 repeat. 2 disordered regions span residues serine 547–glycine 728 and glycine 776–tyrosine 796. Low complexity predominate over residues serine 550 to leucine 569. The segment covering arginine 573–arginine 594 has biased composition (polar residues). Low complexity-rich tracts occupy residues alanine 603–alanine 618, glutamine 642–aspartate 656, and valine 665–glycine 679. Residues glutamine 711–arginine 721 show a composition bias toward polar residues. Low complexity predominate over residues serine 785–tyrosine 796. An HEAT 5 repeat occupies glutamine 930 to proline 967. Disordered regions lie at residues leucine 1037–proline 1080 and valine 1121–glycine 1147. Over residues lysine 1038–asparagine 1050 the composition is skewed to low complexity. Residues serine 1062 to serine 1074 are compositionally biased toward polar residues. The span at valine 1121–glutamate 1130 shows a compositional bias: basic and acidic residues. HEAT repeat units follow at residues glutamate 1260–alanine 1297 and glutamine 1378–glutamate 1415.

It belongs to the CLASP family. As to quaternary structure, interacts (via C-terminus) with clip1/clip-170, and cenpe.

The protein resides in the cytoplasm. It localises to the cytoskeleton. Its subcellular location is the microtubule organizing center. The protein localises to the centrosome. It is found in the chromosome. The protein resides in the centromere. It localises to the kinetochore. Its subcellular location is the spindle. The protein localises to the golgi apparatus. It is found in the trans-Golgi network. Functionally, microtubule plus-end tracking protein that promotes the stabilization of dynamic microtubules during anaphase. Plays a crucial role in chromatin-induced microtubule formation. May also act at microtubule minus ends. May be involved in the nucleation of noncentrosomal microtubules originating from the trans-Golgi network (TGN). This is CLIP-associating protein 1-B from Xenopus laevis (African clawed frog).